The sequence spans 2230 residues: Probable serine/threonine-protein kinase DDB_G0267686 (2230 aa).

Over residues 1–12 (MEPNNNISNSNN) the composition is skewed to low complexity. Disordered regions lie at residues 1–22 (MEPNNNISNSNNGGSGIDGDGK), 121–152 (NNNSNNNNNDNNNNNNNNNNNNNNNNNIQLNN), 270–352 (DEKE…DKIS), 368–397 (PIINATDSSSNSINSSSNNSIATTPGRLSS), 430–451 (NGASGSNSGNVSPSGPTPILST), 464–574 (KNSS…NSPS), 593–620 (GSGSSSLGKGSSKKIKDSYSNNNNNSST), 699–849 (QHQQ…LLPS), and 915–974 (SNQI…SSNS). Residues 270–336 (DEKENKEGGQ…NENEKNHNDK (67 aa)) are compositionally biased toward basic and acidic residues. The segment covering 337–346 (NDDDDDDEDN) has biased composition (acidic residues). 6 stretches are compositionally biased toward low complexity: residues 375–388 (SSSNSINSSSNNSI), 430–447 (NGASGSNSGNVSPSGPTP), 473–574 (NNNN…NSPS), 593–602 (GSGSSSLGKG), 610–619 (SYSNNNNNSS), and 699–721 (QHQQHQQAHQHQHQQQQQHQQQL). Positions 722–731 (KSRSNTTNTP) are enriched in polar residues. Residues 745–754 (NSPPVSPPSS) show a composition bias toward pro residues. 2 stretches are compositionally biased toward low complexity: residues 755–766 (PMLSPLSSSPPS) and 783–818 (TGSLLSGSSSNNNTTTTTTTTTSNSNSLSNNNRSNS). Polar residues predominate over residues 840-849 (YNTTPPLLPS). In terms of domain architecture, RGS spans 991–1119 (SLSALMKDRI…CILHSTTNGT (129 aa)). 8 disordered regions span residues 1146-1181 (SKETSNSLVNNNTTPNTSTASPSITASSSSTSINNN), 1220-1243 (KLSHSNSPSPSSSPPDSYTSNQPL), 1300-1362 (LSPP…GDQT), 1506-1546 (QQQQ…QPQQ), 1563-1611 (PTIP…NNNS), 1725-1771 (VSNN…NNGN), 1802-1848 (NNLM…NNNH), and 1905-1929 (ENNTTTTTTTTSNRPFRSNNPTISQ). Low complexity-rich tracts occupy residues 1149–1181 (TSNSLVNNNTTPNTSTASPSITASSSSTSINNN) and 1222–1239 (SHSNSPSPSSSPPDSYTS). Over residues 1324-1353 (TNGSMKSSLFQQQLQPTGSINSSPINNHQV) the composition is skewed to polar residues. 2 stretches are compositionally biased toward low complexity: residues 1506-1520 (QQQQQQHQQHQQFQP) and 1530-1546 (PSSNSIIQPSQQQQPQQ). Over residues 1726 to 1769 (SNNNNINSNNNNNNNNNNNNNNNNNNNNNNNNNNNNNNNSNNNN) the composition is skewed to low complexity. A compositionally biased stretch (low complexity) spans 1905 to 1915 (ENNTTTTTTTT). The span at 1916–1929 (SNRPFRSNNPTISQ) shows a compositional bias: polar residues. In terms of domain architecture, Protein kinase spans 1949–2208 (IVFLNKLGEG…SCPEILDSLL (260 aa)). Residues 1955–1963 (LGEGTSAKV) and Lys1976 contribute to the ATP site. Catalysis depends on Asp2069, which acts as the Proton acceptor.

Belongs to the protein kinase superfamily. TKL Ser/Thr protein kinase family.

The enzyme catalyses L-seryl-[protein] + ATP = O-phospho-L-seryl-[protein] + ADP + H(+). It catalyses the reaction L-threonyl-[protein] + ATP = O-phospho-L-threonyl-[protein] + ADP + H(+). The sequence is that of Probable serine/threonine-protein kinase DDB_G0267686 from Dictyostelium discoideum (Social amoeba).